The chain runs to 326 residues: Polycomb complex protein BMI-1 (326 aa).

An RING-type zinc finger spans residues 18–57; the sequence is CVLCGGYFIDATTIIECLHSFCKTCIVRYLETSKYCPICD. The Nuclear localization signal signature appears at 81-95; the sequence is KLVPGLFKNEMKRRR. Positions 162 to 182 are interaction with PHC2; it reads RYLRCPAAMTVMHLRKFLRSK. The interaction with E4F1 stretch occupies residues 164 to 228; it reads LRCPAAMTVM…GPLPLKYRVR (65 aa). The interval 236 to 326 is disordered; sequence ISHQRDGLTN…VNGSSATSSG (91 aa). Composition is skewed to low complexity over residues 266–278, 290–303, and 315–326; these read PSTSSCLPSPSTP, SSTMNGTSSSPSGN, and SSVNGSSATSSG.

In terms of assembly, component of a PRC1-like complex. Identified in a PRC1-like HPRC-H complex with CBX2, CBX4, CBX8, PHC1, PHC2, PHC3 RING1 and RNF2. Interacts with RNF2/RING2. Interacts with RING1. Part of a complex that contains RNF2, UB2D3 and BMI1, where RNF2 and BMI1 form a tight heterodimer, and UB2D3 interacts only with RNF2. The complex composed of RNF2, UB2D3 and BMI1 binds nucleosomes, and has activity only with nucleosomal histone H2A. Interacts with CBX7 and CBX8. Interacts with SPOP. Part of a complex consisting of BMI1, CUL3 and SPOP. Interacts with E4F1. Interacts with PHC2. Interacts with zinc finger protein ZNF277. May be part of a complex including at least ZNF277, BMI1 and RNF2/RING2. Post-translationally, may be polyubiquitinated; which does not lead to proteasomal degradation. Monoubiquitinated.

It is found in the nucleus. The protein localises to the cytoplasm. Functionally, component of a Polycomb group (PcG) multiprotein PRC1-like complex, a complex class required to maintain the transcriptionally repressive state of many genes, including Hox genes, throughout development. PcG PRC1 complex acts via chromatin remodeling and modification of histones; it mediates monoubiquitination of histone H2A 'Lys-119', rendering chromatin heritably changed in its expressibility. The complex composed of RNF2, UB2D3 and BMI1 binds nucleosomes, and has activity only with nucleosomal histone H2A. In the PRC1-like complex, regulates the E3 ubiquitin-protein ligase activity of RNF2/RING2. This is Polycomb complex protein BMI-1 (BMI1) from Bos taurus (Bovine).